The primary structure comprises 497 residues: Serine hydroxymethyltransferase (497 aa).

Residues L176 and 180-182 (GHL) each bind (6S)-5,6,7,8-tetrahydrofolate. N6-(pyridoxal phosphate)lysine is present on K289.

The protein belongs to the SHMT family. As to quaternary structure, homodimer. Pyridoxal 5'-phosphate serves as cofactor.

The protein resides in the cytoplasm. It carries out the reaction (6R)-5,10-methylene-5,6,7,8-tetrahydrofolate + glycine + H2O = (6S)-5,6,7,8-tetrahydrofolate + L-serine. The protein operates within one-carbon metabolism; tetrahydrofolate interconversion. Its pathway is amino-acid biosynthesis; glycine biosynthesis; glycine from L-serine: step 1/1. Functionally, catalyzes the reversible interconversion of serine and glycine with tetrahydrofolate (THF) serving as the one-carbon carrier. This reaction serves as the major source of one-carbon groups required for the biosynthesis of purines, thymidylate, methionine, and other important biomolecules. Also exhibits THF-independent aldolase activity toward beta-hydroxyamino acids, producing glycine and aldehydes, via a retro-aldol mechanism. This chain is Serine hydroxymethyltransferase, found in Chlamydia muridarum (strain MoPn / Nigg).